The following is a 332-amino-acid chain: Glycerol-3-phosphate dehydrogenase [NAD(P)+] (332 aa).

Positions 11, 12, 32, and 106 each coordinate NADPH. Lys-106, Gly-134, and Ser-136 together coordinate sn-glycerol 3-phosphate. Residue Ala-138 participates in NADPH binding. Sn-glycerol 3-phosphate-binding residues include Lys-189, Asp-242, Ser-252, Arg-253, and Asn-254. The Proton acceptor role is filled by Lys-189. Residue Arg-253 participates in NADPH binding. The NADPH site is built by Val-277 and Glu-279.

The protein belongs to the NAD-dependent glycerol-3-phosphate dehydrogenase family.

Its subcellular location is the cytoplasm. It catalyses the reaction sn-glycerol 3-phosphate + NAD(+) = dihydroxyacetone phosphate + NADH + H(+). It carries out the reaction sn-glycerol 3-phosphate + NADP(+) = dihydroxyacetone phosphate + NADPH + H(+). Its pathway is membrane lipid metabolism; glycerophospholipid metabolism. Functionally, catalyzes the reduction of the glycolytic intermediate dihydroxyacetone phosphate (DHAP) to sn-glycerol 3-phosphate (G3P), the key precursor for phospholipid synthesis. The protein is Glycerol-3-phosphate dehydrogenase [NAD(P)+] of Clostridium acetobutylicum (strain ATCC 824 / DSM 792 / JCM 1419 / IAM 19013 / LMG 5710 / NBRC 13948 / NRRL B-527 / VKM B-1787 / 2291 / W).